The following is a 387-amino-acid chain: LL-diaminopimelate aminotransferase (387 aa).

Residues Y14 and G39 each contribute to the substrate site. Pyridoxal 5'-phosphate contacts are provided by residues Y68, 102 to 103 (SK), Y127, N177, Y208, and 236 to 238 (SLS). The substrate site is built by K103, Y127, and N177. K239 is modified (N6-(pyridoxal phosphate)lysine). R247 serves as a coordination point for pyridoxal 5'-phosphate. R365 serves as a coordination point for substrate.

It belongs to the class-I pyridoxal-phosphate-dependent aminotransferase family. LL-diaminopimelate aminotransferase subfamily. Homodimer. Pyridoxal 5'-phosphate serves as cofactor.

The catalysed reaction is (2S,6S)-2,6-diaminopimelate + 2-oxoglutarate = (S)-2,3,4,5-tetrahydrodipicolinate + L-glutamate + H2O + H(+). It participates in amino-acid biosynthesis; L-lysine biosynthesis via DAP pathway; LL-2,6-diaminopimelate from (S)-tetrahydrodipicolinate (aminotransferase route): step 1/1. Involved in the synthesis of meso-diaminopimelate (m-DAP or DL-DAP), required for both lysine and peptidoglycan biosynthesis. Catalyzes the direct conversion of tetrahydrodipicolinate to LL-diaminopimelate. The protein is LL-diaminopimelate aminotransferase of Aquifex aeolicus (strain VF5).